Here is an 84-residue protein sequence, read N- to C-terminus: U4-theraphotoxin-Hhn1a (84 aa).

A signal peptide spans 1–22 (MKVTLIAILTCAAVLVLHTTAA). The propeptide occupies 23–47 (EELEESQLMEVGMPDTELEAVDEER). Disulfide bonds link Cys51-Cys65, Cys55-Cys76, and Cys70-Cys81.

Belongs to the neurotoxin 12 (Hwtx-2) family. 02 (Hwtx-2) subfamily. As to expression, expressed by the venom gland.

The protein localises to the secreted. In terms of biological role, postsynaptic neurotoxin. The polypeptide is U4-theraphotoxin-Hhn1a (Cyriopagopus hainanus (Chinese bird spider)).